We begin with the raw amino-acid sequence, 403 residues long: Farnesyl pyrophosphate synthase (403 aa).

Residues D156 and D160 each coordinate Mg(2+). Positions 156–160 (DDLAD) match the DDXXD motif motif.

This sequence belongs to the FPP/GGPP synthase family. Mg(2+) serves as cofactor.

It carries out the reaction isopentenyl diphosphate + (2E)-geranyl diphosphate = (2Z,6E)-farnesyl diphosphate + diphosphate. It participates in pheromone biosynthesis. Farnesyl pyrophosphate synthase involved in pheromone biosynthesis by catalyzing the formation of (2Z,6E)-farnesyl diphosphate. This is Farnesyl pyrophosphate synthase from Nezara viridula (Southern green stink bug).